Consider the following 254-residue polypeptide: Distal membrane-arm assembly complex protein 2 (254 aa).

Ser250 is modified (phosphoserine).

The protein belongs to the ATP synthase subunit s family. As to quaternary structure, interacts with incompletely assembled mitochondrial NADH:ubiquinone oxidoreductase complex (complex I).

It is found in the mitochondrion. In terms of biological role, required for the assembly of the mitochondrial NADH:ubiquinone oxidoreductase complex (complex I). Involved in the assembly of the distal region of complex I. The polypeptide is Distal membrane-arm assembly complex protein 2 (Rattus norvegicus (Rat)).